Consider the following 183-residue polypeptide: Large ribosomal subunit protein uL5 (183 aa).

The protein belongs to the universal ribosomal protein uL5 family. Part of the 50S ribosomal subunit; part of the 5S rRNA/L5/L18/L25 subcomplex. Contacts the 5S rRNA and the P site tRNA. Forms a bridge to the 30S subunit in the 70S ribosome.

Its function is as follows. This is one of the proteins that bind and probably mediate the attachment of the 5S RNA into the large ribosomal subunit, where it forms part of the central protuberance. In the 70S ribosome it contacts protein S13 of the 30S subunit (bridge B1b), connecting the 2 subunits; this bridge is implicated in subunit movement. Contacts the P site tRNA; the 5S rRNA and some of its associated proteins might help stabilize positioning of ribosome-bound tRNAs. The polypeptide is Large ribosomal subunit protein uL5 (Fusobacterium nucleatum subsp. nucleatum (strain ATCC 25586 / DSM 15643 / BCRC 10681 / CIP 101130 / JCM 8532 / KCTC 2640 / LMG 13131 / VPI 4355)).